Reading from the N-terminus, the 215-residue chain is Adenylate kinase (215 aa).

10–15 (GAGKGT) is a binding site for ATP. The segment at 30–59 (STGDMFRAAMKNETEMGKLAKSFIDKGELV) is NMP. AMP contacts are provided by residues threonine 31, arginine 36, 57 to 59 (ELV), 86 to 89 (GYPR), and glutamine 93. The LID stretch occupies residues 127-165 (GRYICRNCGATYHKIFNPTKVEGTCDVCGSHDLYQRADD). Residue arginine 128 coordinates ATP. Residues cysteine 131 and cysteine 134 each contribute to the Zn(2+) site. 137-138 (TY) lines the ATP pocket. Positions 151 and 154 each coordinate Zn(2+). Residues arginine 162 and arginine 173 each contribute to the AMP site. Residue glutamine 201 coordinates ATP.

The protein belongs to the adenylate kinase family. As to quaternary structure, monomer.

It is found in the cytoplasm. The catalysed reaction is AMP + ATP = 2 ADP. It participates in purine metabolism; AMP biosynthesis via salvage pathway; AMP from ADP: step 1/1. In terms of biological role, catalyzes the reversible transfer of the terminal phosphate group between ATP and AMP. Plays an important role in cellular energy homeostasis and in adenine nucleotide metabolism. The polypeptide is Adenylate kinase (Lactococcus lactis subsp. cremoris (strain SK11)).